The chain runs to 933 residues: Valine--tRNA ligase (933 aa).

The short motif at 58–68 (PNVTGSLHMGH) is the 'HIGH' region element. Residues 556–560 (KMSKS) carry the 'KMSKS' region motif. K559 contributes to the ATP binding site. Coiled coils occupy residues 807–833 (VTKNQNLLNLLKKATQDIQALTRANKV) and 864–933 (EGLV…LGLK).

The protein belongs to the class-I aminoacyl-tRNA synthetase family. ValS type 1 subfamily. As to quaternary structure, monomer.

Its subcellular location is the cytoplasm. The enzyme catalyses tRNA(Val) + L-valine + ATP = L-valyl-tRNA(Val) + AMP + diphosphate. Catalyzes the attachment of valine to tRNA(Val). As ValRS can inadvertently accommodate and process structurally similar amino acids such as threonine, to avoid such errors, it has a 'posttransfer' editing activity that hydrolyzes mischarged Thr-tRNA(Val) in a tRNA-dependent manner. This is Valine--tRNA ligase from Prochlorococcus marinus (strain SARG / CCMP1375 / SS120).